The primary structure comprises 127 residues: MDLIVEDLAAIDNKLSQRHIDLDPNGYFIIYIDKTAGLIYAKHFTNIIDERGLAVDPETGKVIPARGKVERTYTTVFAGRTAKELCVKIFEETQPCPVTMLDHAAYLGREFVRAEVALVAGQEYVQD.

Belongs to the ycf91 family.

The chain is Ycf91-like protein from Nostoc sp. (strain PCC 7120 / SAG 25.82 / UTEX 2576).